Here is a 722-residue protein sequence, read N- to C-terminus: Portal protein (722 aa).

The interval 402–426 (ASIDTSQPGFGQSNRAQSSTTEETR) is disordered. Residues 404-422 (IDTSQPGFGQSNRAQSSTT) are compositionally biased toward polar residues. Positions 448–469 (LEGYVNKLFNTVEGLKAANKDL) are putative leucine zipper motif. Residues 658 to 683 (QREAEDLPDGHHGRRNDFHSPSSRRE) are compositionally biased toward basic and acidic residues. The segment at 658 to 722 (QREAEDLPDG…GEDDDGSQRD (65 aa)) is disordered. Residues 684–696 (RYSRRSGYKRHRW) show a composition bias toward basic residues. Over residues 697 to 706 (NRESRRDYRR) the composition is skewed to basic and acidic residues. A compositionally biased stretch (acidic residues) spans 713 to 722 (GEDDDGSQRD).

The protein belongs to the herpesviridae portal protein family. As to quaternary structure, homododecamerizes. Interacts with terminase subunits TRM1 and TRM3.

It is found in the virion. The protein resides in the host nucleus. Functionally, forms a portal in the viral capsid through which viral DNA is translocated during DNA packaging. Assembles as a dodecamer at a single fivefold axe of the T=16 icosahedric capsid. Binds to the molecular motor that translocates the viral DNA, termed terminase. This chain is Portal protein (MDV018), found in Gallid herpesvirus 2 (strain Chicken/Md5/ATCC VR-987) (GaHV-2).